The primary structure comprises 248 residues: Carbohydrate deacetylase (248 aa).

The Mg(2+) site is built by histidine 59 and histidine 121.

It belongs to the YdjC deacetylase family. The cofactor is Mg(2+).

Functionally, probably catalyzes the deacetylation of acetylated carbohydrates an important step in the degradation of oligosaccharides. The protein is Carbohydrate deacetylase of Brevibacillus brevis (strain 47 / JCM 6285 / NBRC 100599).